A 147-amino-acid chain; its full sequence is Transcriptional repressor NrdR (147 aa).

A zinc finger lies at 3 to 34 (CPFCGHEDTQVAETRESDEGDVIRRRRRCPSC). An ATP-cone domain is found at 49–139 (PAIVKKDGSR…VYRSFEGVDE (91 aa)).

Belongs to the NrdR family. Requires Zn(2+) as cofactor.

In terms of biological role, negatively regulates transcription of bacterial ribonucleotide reductase nrd genes and operons by binding to NrdR-boxes. The protein is Transcriptional repressor NrdR of Methylibium petroleiphilum (strain ATCC BAA-1232 / LMG 22953 / PM1).